The sequence spans 318 residues: Porphobilinogen deaminase (318 aa).

Cysteine 241 is modified (S-(dipyrrolylmethanemethyl)cysteine).

It belongs to the HMBS family. As to quaternary structure, monomer. Dipyrromethane is required as a cofactor.

It carries out the reaction 4 porphobilinogen + H2O = hydroxymethylbilane + 4 NH4(+). Its pathway is porphyrin-containing compound metabolism; protoporphyrin-IX biosynthesis; coproporphyrinogen-III from 5-aminolevulinate: step 2/4. Its function is as follows. Tetrapolymerization of the monopyrrole PBG into the hydroxymethylbilane pre-uroporphyrinogen in several discrete steps. This Geobacter sp. (strain M21) protein is Porphobilinogen deaminase.